Consider the following 214-residue polypeptide: Alkaline phosphatase-like protein (214 aa).

The next 4 helical transmembrane spans lie at 3–23 (EIII…LIMI), 48–68 (LGII…ALIL), 141–161 (FLIL…SLGA), and 177–197 (YSSV…LLFV).

The protein belongs to the DedA family.

It localises to the cell membrane. The sequence is that of Alkaline phosphatase-like protein (apl) from Lactococcus lactis subsp. cremoris (strain MG1363).